A 253-amino-acid polypeptide reads, in one-letter code: Adenylate kinase (253 aa).

15 to 20 serves as a coordination point for ATP; sequence GSGKGT. An NMP region spans residues 35 to 64; sequence SSGDLLRNAVSQNTPLGQEIKSYLDQGKLL. AMP is bound by residues serine 36, arginine 41, 62–64, 103–106, and glutamine 110; these read KLL and GFPR. An LID region spans residues 143 to 176; it reads SRYICPSCQGIYNKQQGFSRCPKCLVELTRRSDD. Arginine 144 provides a ligand contact to ATP. Zn(2+) is bound by residues cysteine 147 and cysteine 150. 153–154 provides a ligand contact to ATP; that stretch reads IY. Zn(2+)-binding residues include cysteine 163 and cysteine 166. Residues arginine 173 and arginine 184 each contribute to the AMP site. Position 212 (alanine 212) interacts with ATP.

It belongs to the adenylate kinase family. In terms of assembly, monomer.

It is found in the cytoplasm. It carries out the reaction AMP + ATP = 2 ADP. The protein operates within purine metabolism; AMP biosynthesis via salvage pathway; AMP from ADP: step 1/1. Catalyzes the reversible transfer of the terminal phosphate group between ATP and AMP. Plays an important role in cellular energy homeostasis and in adenine nucleotide metabolism. This is Adenylate kinase from Chlamydia muridarum (strain MoPn / Nigg).